The chain runs to 464 residues: Zinc transporter 6 (464 aa).

Residues 1 to 33 (MGTIYLFRKTQRSLLGKLTQEFRLVTADRRSWK) are Cytoplasmic-facing. Residues 34-54 (ILLFGAINVVCTGFLLTWCSS) form a helical membrane-spanning segment. The Extracellular portion of the chain corresponds to 55–64 (TNSMALTAYT). A helical membrane pass occupies residues 65-85 (YLTIFDLFSLITCLISYWVMM). The Cytoplasmic segment spans residues 86-98 (KKPSPTYSFGFER). Residues 99 to 119 (FEVLSVFASTVLAQLGALFIL) traverse the membrane as a helical segment. Over 120–134 (KESAERFVEQPEIHT) the chain is Extracellular. A helical membrane pass occupies residues 135-155 (GRLLVGTFVALCFNLFSMLSI). The Cytoplasmic segment spans residues 156–200 (RNKPFAYVSEAASTSWLQEHVADLSRSLCGIIPGLSSIFLPRMNP). The helical transmembrane segment at 201–221 (FVLIDIAGALALCITYMLIEI) threads the bilayer. Over 222 to 228 (NNYFAVD) the chain is Extracellular. Residues 229-249 (TASAIAIAVMTFGTMYPMSVY) traverse the membrane as a helical segment. Topologically, residues 250–464 (SGKVLLQTTP…TPGQFTQFKQ (215 aa)) are cytoplasmic.

The protein belongs to the cation diffusion facilitator (CDF) transporter (TC 2.A.4) family. SLC30A subfamily. Heterodimer with SLC30A5; form a functional zinc ion transmembrane transporter.

Its subcellular location is the golgi apparatus. The protein localises to the trans-Golgi network membrane. Its function is as follows. Has probably no intrinsic transporter activity but together with SLC30A5 forms a functional zinc ion:proton antiporter heterodimer, mediating zinc entry into the lumen of organelles along the secretory pathway. As part of that zinc ion:proton antiporter, contributes to zinc ion homeostasis within the early secretory pathway and regulates the activation and folding of enzymes like alkaline phosphatases and enzymes involved in phosphatidylinositol glycan anchor biosynthesis. This is Zinc transporter 6 (slc30a6) from Xenopus tropicalis (Western clawed frog).